The primary structure comprises 137 residues: Cellular retinoic acid-binding protein 1 (137 aa).

The short motif at 21–31 is the Nuclear localization signal element; it reads KALGVNAMLRK. 132–134 is an all-trans-retinoate binding site; sequence RIY.

The protein belongs to the calycin superfamily. Fatty-acid binding protein (FABP) family.

It is found in the cytoplasm. Cytosolic CRABPs may regulate the access of retinoic acid to the nuclear retinoic acid receptors. The chain is Cellular retinoic acid-binding protein 1 (crabp1) from Hippocampus comes (Tiger tail seahorse).